The primary structure comprises 634 residues: MNQPIGIADSSRPKTNVRLTISANNLMDLDVFSKSDPICLIYEKTSGRKATTTEEITVPTWKDKQWTERGRTEVVMNNLNPQFTKTFLLPYFFEETQLLRFEIYDADSPTVGQDLSSHDFLGRFECVLAQIVSYSTLKAHLGKTGQIGAQWRNKDKNTKTGSITIYAEEDEKAEKIQFDVCGEGLDKKDFFGKSDPYLNFKRKFDDGSTHLIHRTEVKPKTLDPRWATVQINTQTLCAKDGDRPIIIECYDHDKWKKGEEPRGDAKFSRDDLIGTAQTTLNELLRGSSDAVEILLTNEKKKAKKGDKYKCSGTLKIWNSRIVIEPTFLDFISGGTQLDFAVAVDFTASNGPPKSSSSLHFMSADRPNQYELALRSVLSICQHYNSSKTFEAFGFGAKLPNQSSVSAIFPLDLQRGTSEVVGITGVMTAYRHALSNVQLYGPTNFAPIIENVARKAQNMIHDSARYQILLIITDGIISDMHATIRSIISASGLPLSIIIIGVGNEDFEKMHELDSDDALLQQDSRIAQRDIVQFVTMREFLNNGQGLYLDPDVIQENLAREVLYEVPAQLTGYMKQRGFQPRPVDDPWRRDSPPPEFDPILDGTGRRAPMLQAPPAGFQYPVYADTSIASAPPMY.

C2 domains lie at 1 to 141 (MNQP…KAHL) and 159 to 295 (KTGS…EILL). Ca(2+) is bound by residues L29, D30, D36, D105, D107, D119, D189, D195, D251, D253, and D271. The region spanning 338–557 (DFAVAVDFTA…LDPDVIQENL (220 aa)) is the VWFA domain. The segment at 576–603 (RGFQPRPVDDPWRRDSPPPEFDPILDGT) is disordered. Over residues 582–592 (PVDDPWRRDSP) the composition is skewed to basic and acidic residues.

This sequence belongs to the copine family. As to quaternary structure, interacts with nicotinic acetylcholine receptor. It depends on Ca(2+) as a cofactor. Expressed in head and tail neurons, ventral cord moto-neurons, body wall muscles and hypodermal cells of the vulva.

The protein localises to the cell membrane. Functionally, exhibits calcium-dependent phospholipid binding properties. May function in membrane trafficking. Regulates synaptic levels of nicotinic acetylcholine receptor subunit lev-1 and unc-38 in the nerve cord. Involved in nicotinic acetylcholine receptor (nAChR)-mediated sensitivity to nicotine and levamisole. Affects directional sperm motility. The sequence is that of Nicotinic receptor-associated protein 1 (nra-1) from Caenorhabditis elegans.